Consider the following 209-residue polypeptide: Somatotropin (209 aa).

A signal peptide spans 1–22 (MGQVFLLMPVLLVAGYLSLGAA). Zn(2+) is bound at residue His38. Cys71 and Cys182 are joined by a disulfide. Glu191 contributes to the Zn(2+) binding site. The cysteines at positions 199 and 207 are disulfide-linked.

The protein belongs to the somatotropin/prolactin family.

It localises to the secreted. In terms of biological role, growth hormone plays an important role in growth control and is involved in the regulation of several anabolic processes. Implicated as an osmoregulatory substance important for seawater adaptation. The chain is Somatotropin (gh) from Esox lucius (Northern pike).